We begin with the raw amino-acid sequence, 1470 residues long: ABC transporter G family member 48 (1470 aa).

A disordered region spans residues 1–47 (MAAAPSASGRRSMSWGSSISQSFRQAEADDPFGRAASQQGHDDDEEN). Positions 9-24 (GRRSMSWGSSISQSFR) are enriched in polar residues. An ABC transporter 1 domain is found at 172–445 (GLIGRFGSSN…FENAGFRCPE (274 aa)). 205 to 212 (GPPSSGKS) is an ATP binding site. Positions 523–736 (ESLRAVMSRE…SQQAISINEF (214 aa)) constitute an ABC transmembrane type-2 1 domain. 6 helical membrane passes run 541–561 (FIYI…MTVF), 577–597 (FLGA…AELQ), 629–649 (VPVS…VMGF), 660–680 (FIAF…LGAI), 686–706 (VANT…GFLI), and 772–792 (FWIS…LYIL). Residues 828 to 852 (QIVHNNGASNTSATSSIPMSGSRST) form a disordered region. Residues 832 to 843 (NNGASNTSATSS) are compositionally biased toward low complexity. One can recognise an ABC transporter 2 domain in the interval 869-1121 (LCFNHVNYYV…KLVEYFEAVP (253 aa)). 914 to 921 (GVSGAGKT) contributes to the ATP binding site. The region spanning 1194–1408 (SQCIANFWKQ…TIYGVVASQF (215 aa)) is the ABC transmembrane type-2 2 domain. The next 7 membrane-spanning stretches (helical) occupy residues 1215 to 1234 (AMRY…VFWQ), 1249 to 1271 (LGAT…QPVV), 1301 to 1321 (VIYN…MIGY), 1331 to 1351 (FMFF…MLVA), 1359 to 1379 (ANIL…FLVV), 1389 to 1409 (WYYW…SQFG), and 1439 to 1459 (FLGY…FIFG).

It belongs to the ABC transporter superfamily. ABCG family. PDR (TC 3.A.1.205) subfamily.

Its subcellular location is the membrane. May be a general defense protein. The sequence is that of ABC transporter G family member 48 from Oryza sativa subsp. japonica (Rice).